The following is a 30-amino-acid chain: Cycloviolacin-H3 (30 aa).

Positions 1-30 form a cross-link, cyclopeptide (Gly-Asn); that stretch reads GLPVCGETCFGGTCNTPGCICDPWPVCTRN. 3 disulfide bridges follow: Cys-5–Cys-19, Cys-9–Cys-21, and Cys-14–Cys-27.

This is a cyclic peptide.

Functionally, probably participates in a plant defense mechanism. This chain is Cycloviolacin-H3, found in Viola hederacea (Australian violet).